Here is a 290-residue protein sequence, read N- to C-terminus: 4-hydroxybenzoate octaprenyltransferase (290 aa).

Transmembrane regions (helical) follow at residues 33–53, 99–119, 141–161, 213–233, 234–254, and 268–288; these read LWAL…AVFV, LFVI…VKTI, LPQV…FCAV, LIIG…GWLN, GLGA…IWQQ, and AFLN…LSYL.

The protein belongs to the UbiA prenyltransferase family. Mg(2+) serves as cofactor.

The protein localises to the cell inner membrane. The catalysed reaction is all-trans-octaprenyl diphosphate + 4-hydroxybenzoate = 4-hydroxy-3-(all-trans-octaprenyl)benzoate + diphosphate. It functions in the pathway cofactor biosynthesis; ubiquinone biosynthesis. Its function is as follows. Catalyzes the prenylation of para-hydroxybenzoate (PHB) with an all-trans polyprenyl group. Mediates the second step in the final reaction sequence of ubiquinone-8 (UQ-8) biosynthesis, which is the condensation of the polyisoprenoid side chain with PHB, generating the first membrane-bound Q intermediate 3-octaprenyl-4-hydroxybenzoate. The polypeptide is 4-hydroxybenzoate octaprenyltransferase (Cronobacter sakazakii (strain ATCC BAA-894) (Enterobacter sakazakii)).